The following is a 249-amino-acid chain: Cobalt-precorrin-6A reductase (249 aa).

This sequence belongs to the precorrin-6x reductase family.

The catalysed reaction is Co-precorrin-6B + NAD(+) = Co-precorrin-6A + NADH + H(+). Its pathway is cofactor biosynthesis; adenosylcobalamin biosynthesis; cob(II)yrinate a,c-diamide from sirohydrochlorin (anaerobic route): step 7/10. In terms of biological role, catalyzes the reduction of the macrocycle of cobalt-precorrin-6A to cobalt-precorrin-6B. The polypeptide is Cobalt-precorrin-6A reductase (cbiJ) (Methanocaldococcus jannaschii (strain ATCC 43067 / DSM 2661 / JAL-1 / JCM 10045 / NBRC 100440) (Methanococcus jannaschii)).